Here is a 551-residue protein sequence, read N- to C-terminus: Oleuropein beta-glucosidase (551 aa).

Positions 1–27 are enriched in polar residues; sequence MDIQSNVLTITSGSTPTDTSSNGQAAK. The tract at residues 1–33 is disordered; that stretch reads MDIQSNVLTITSGSTPTDTSSNGQAAKSTKERI. A beta-D-glucoside is bound by residues Gln-52, His-156, 201–202, Tyr-363, Glu-433, Trp-482, 489–490, and Phe-498; these read NE and EW. Glu-202 functions as the Proton donor in the catalytic mechanism. Glu-433 (nucleophile) is an active-site residue. Residues 502–551 are required for the homomultimerization; that stretch reads YVDYANGRYTRLPKRSAVWWRNFLTKPTAVPLKNEPEKSEDRRKRLRGST. A disordered region spans residues 532–551; sequence PLKNEPEKSEDRRKRLRGST. Residues 535–544 show a composition bias toward basic and acidic residues; that stretch reads NEPEKSEDRR. The short motif at 542–550 is the Nuclear localization signal element; it reads DRRKRLRGS.

Belongs to the glycosyl hydrolase 1 family. In terms of assembly, homomultimer. Native form of the enzyme requires at least an octamer conformation. In terms of tissue distribution, expressed in expanding leaves and in young drupes, mostly in the developing seed coat tissues, the perisperm and the mesocarp. Also detected in shoot and root meristems, flower buds, developing ovaries and tapetal cells of the anther. Not detected in embryos or endosperm, or in leaf trichomes.

The protein resides in the nucleus. It catalyses the reaction oleuropein + H2O = oleuropein aglycone + D-glucose. Functionally, major beta-glucosidase activating oleuropein into a potent protein cross-linking agent. No activity with rutin, luteolin or p-nitrophenyl-beta-glucopyranoside as substrates. This chain is Oleuropein beta-glucosidase, found in Olea europaea (Common olive).